The primary structure comprises 399 residues: Phosphoprotein (399 aa).

2 stretches are compositionally biased toward polar residues: residues 30–46 (ATSQ…SSRT) and 82–112 (GRQN…LPSP). A disordered region spans residues 30 to 112 (ATSQSSLNKP…MGSDTQLPSP (83 aa)). The interval 224–287 (NYASEILDAI…ITTMKIMDPG (64 aa)) is multimerization. Positions 226 to 253 (ASEILDAIKALEVRLDRIEGKVDKIMLT) form a coiled coil.

Belongs to the rubulavirus/avulavirus P protein family. In terms of assembly, homotetramer. Interacts (via multimerization domain) with polymerase L; this interaction forms the polymerase L-P complex. Interacts (via N-terminus) with N0 (via Ncore); this interaction allows P to chaperon N0 to avoid N polymerization before encapsidation. Interacts (via C-terminus) with N-RNA template; this interaction positions the polymerase on the template for both transcription and replication.

Functionally, essential cofactor of the RNA polymerase L that plays a central role in the transcription and replication by forming the polymerase complex with RNA polymerase L and recruiting L to the genomic N-RNA template for RNA synthesis. Also plays a central role in the encapsidation of nascent RNA chains by forming the encapsidation complex with the nucleocapsid protein N (N-P complex). Acts as a chaperone for newly synthesized free N protein, so-called N0, allowing encapsidation of nascent RNA chains during replication. The nucleoprotein protein N prevents excessive phosphorylation of P, which leads to down-regulation of viral transcription/ replication. Participates, together with N, in the formation of viral factories (viroplasms), which are large inclusions in the host cytoplasm where replication takes place. The chain is Phosphoprotein (P/V) from Human parainfluenza 4a virus (strain Toshiba) (HPIV-4a).